The chain runs to 42 residues: Cytochrome b6-f complex subunit 7 (42 aa).

The chain crosses the membrane as a helical span at residues 19-37 (AVVCFSMTLFGLSLGFGLL).

This sequence belongs to the PetM family. As to quaternary structure, the 4 large subunits of the cytochrome b6-f complex are cytochrome b6, subunit IV (17 kDa polypeptide, PetD), cytochrome f and the Rieske protein, while the 4 small subunits are PetG, PetL, PetM and PetN. The complex functions as a dimer.

It is found in the plastid. It localises to the chloroplast thylakoid membrane. Functionally, component of the cytochrome b6-f complex, which mediates electron transfer between photosystem II (PSII) and photosystem I (PSI), cyclic electron flow around PSI, and state transitions. This is Cytochrome b6-f complex subunit 7 from Phaeodactylum tricornutum (strain CCAP 1055/1).